The sequence spans 377 residues: Ferric enterobactin transport protein FepE (377 aa).

Residues 1-41 (MSSLNIKQGSDAHFPDYPLASPSNNEIDLLNLISVLWRAKK) are Cytoplasmic-facing. A helical transmembrane segment spans residues 42-62 (TVMAVVFAFACAGLLISFILP). Topologically, residues 63–338 (QKWTSAAVVT…LPVKKDGPGK (276 aa)) are periplasmic. The chain crosses the membrane as a helical span at residues 339-359 (AIIVILSALIGGMVACGGVLL). Over 360–377 (RYAMASRKQDAMMADHLV) the chain is Cytoplasmic.

This sequence belongs to the WzzB/Cld/Rol family.

The protein resides in the cell inner membrane. In terms of biological role, part of the ferric enterobactin transport system. The sequence is that of Ferric enterobactin transport protein FepE (fepE) from Escherichia coli (strain K12).